The following is a 404-amino-acid chain: Propionate kinase (404 aa).

Belongs to the acetokinase family. PduW subfamily.

The protein resides in the cytoplasm. The enzyme catalyses propanoate + ATP = propanoyl phosphate + ADP. Its pathway is polyol metabolism; 1,2-propanediol degradation. Functionally, works with phosphate acetyltransferase (pta) to capture exogenous propionate and regenerate propionyl-CoA during degradation of 1,2-propanediol (1,2-PD). The chain is Propionate kinase from Klebsiella pneumoniae subsp. pneumoniae (strain ATCC 700721 / MGH 78578).